Consider the following 570-residue polypeptide: Ribosome-inactivating protein SNAIf (570 aa).

An N-terminal signal peptide occupies residues M1–R28. N-linked (GlcNAc...) asparagine glycosylation is found at N40, N62, and N140. The active site involves E199. N232 carries an N-linked (GlcNAc...) asparagine glycan. 3 disulfide bridges follow: C284/C316, C332/C351, and C373/C385. Ricin B-type lectin domains are found at residues V319–G439 and V441–T566. One copy of the 1-alpha repeat lies at D329 to W369. A 1-beta repeat occupies L370–N405. The 1-gamma repeat unit spans residues S408–D440. The 2-alpha repeat unit spans residues K452 to V489. Cysteines 455 and 470 form a disulfide. A glycan (N-linked (GlcNAc...) asparagine) is linked at N492. The stretch at R493 to N531 is one 2-beta repeat. C496 and C513 are joined by a disulfide. Residues N526 and N544 are each glycosylated (N-linked (GlcNAc...) asparagine). Residues A534–T567 form a 2-gamma repeat.

This sequence belongs to the ribosome-inactivating protein family. Type 2 RIP subfamily. Tetramer of four pairs of disulfide bound A-B chains. Post-translationally, the precursor is processed in two chains, A and B, that are linked by a disulfide bond. A small truncated form corresponding roughly to the second ricin B-type lectin domain of the B chain, TrSNAIf, can also be produced. In terms of processing, N-glycosylated. Expressed in fruits.

The enzyme catalyses Endohydrolysis of the N-glycosidic bond at one specific adenosine on the 28S rRNA.. Its function is as follows. Neu5Ac(alpha2-6)Gal/GalNAc specific agglutinin. Behaves as a type-2 ribosome-inactivating protein. Strongly inhibits mammalian but not plant ribosomes. The A chain is responsible for inhibiting protein synthesis through the catalytic inactivation of 60S ribosomal subunits by removing adenine from position 4,324 of 28S rRNA. The B chain binds to cell receptors and probably facilitates the entry into the cell of the A chain; B chains are also responsible for cell agglutination (lectin activity). Involved in plant defense against insects. Binds Neu5Ac(alpha2-6)Gal/GalNAc but has no clear agglutination activity. This is Ribosome-inactivating protein SNAIf from Sambucus nigra (European elder).